The sequence spans 233 residues: Probable fimbrial chaperone protein ElfD (233 aa).

The signal sequence occupies residues 1–26; that stretch reads MKTCITKGIVTVSLTAILLSCSSTWA.

This sequence belongs to the periplasmic pilus chaperone family.

It localises to the periplasm. Functionally, part of the elfADCG fimbrial operon, which could be required for adherence to host epithelial cells. Could be required for the biogenesis of the ElfA fimbriae. The sequence is that of Probable fimbrial chaperone protein ElfD (elfD) from Escherichia coli O157:H7.